Here is a 434-residue protein sequence, read N- to C-terminus: 4-hydroxy-3-methylbut-2-en-1-yl diphosphate synthase (flavodoxin) (434 aa).

A compositionally biased stretch (polar residues) spans 1–15 (MQSEAQSPRSSQICS). The tract at residues 1-24 (MQSEAQSPRSSQICSTEPVFGGHQ) is disordered. [4Fe-4S] cluster contacts are provided by Cys-322, Cys-325, Cys-368, and Glu-375.

It belongs to the IspG family. Requires [4Fe-4S] cluster as cofactor.

The catalysed reaction is (2E)-4-hydroxy-3-methylbut-2-enyl diphosphate + oxidized [flavodoxin] + H2O + 2 H(+) = 2-C-methyl-D-erythritol 2,4-cyclic diphosphate + reduced [flavodoxin]. It participates in isoprenoid biosynthesis; isopentenyl diphosphate biosynthesis via DXP pathway; isopentenyl diphosphate from 1-deoxy-D-xylulose 5-phosphate: step 5/6. Converts 2C-methyl-D-erythritol 2,4-cyclodiphosphate (ME-2,4cPP) into 1-hydroxy-2-methyl-2-(E)-butenyl 4-diphosphate. This chain is 4-hydroxy-3-methylbut-2-en-1-yl diphosphate synthase (flavodoxin), found in Burkholderia cenocepacia (strain ATCC BAA-245 / DSM 16553 / LMG 16656 / NCTC 13227 / J2315 / CF5610) (Burkholderia cepacia (strain J2315)).